The sequence spans 275 residues: Lectin 8 (275 aa).

The N-terminal stretch at 1 to 31 (MANSNPKLLVTQNPFSVFLLTFLLLITNVKS) is a signal peptide. 2 N-linked (GlcNAc...) asparagine glycosylation sites follow: Asn55 and Asn150.

The protein belongs to the leguminous lectin family.

In terms of biological role, may be involved in arbuscular mycorrhizal (AM) symbiosis with AM fungi. The polypeptide is Lectin 8 (Medicago truncatula (Barrel medic)).